The chain runs to 220 residues: MKPAKSSPVQIARRGLMLVISSPSGAGKSTIARTLLETDRQIGLSVSVTTRQRRPSEVEDVHYHFKSVREFERLRDSDALLEWAEVHGNFYGTPREPVEQAMGEGRDMLFDIDWQGAQQLQEKMSADVVSIFVLPPTMTELQSRLHRRAEDSEEVIQTRLANSRAEIAHWREYDYVIVNDDLNAALDAVQSIVKAERLRRDRRHGMFDFVRELLEETPSL.

In terms of domain architecture, Guanylate kinase-like spans 15–194 (GLMLVISSPS…ALDAVQSIVK (180 aa)). Residue 22–29 (SPSGAGKS) participates in ATP binding.

Belongs to the guanylate kinase family.

The protein localises to the cytoplasm. It catalyses the reaction GMP + ATP = GDP + ADP. In terms of biological role, essential for recycling GMP and indirectly, cGMP. This Rhizobium johnstonii (strain DSM 114642 / LMG 32736 / 3841) (Rhizobium leguminosarum bv. viciae) protein is Guanylate kinase.